We begin with the raw amino-acid sequence, 62 residues long: Large ribosomal subunit protein uL29 (62 aa).

This sequence belongs to the universal ribosomal protein uL29 family.

In Geobacter metallireducens (strain ATCC 53774 / DSM 7210 / GS-15), this protein is Large ribosomal subunit protein uL29.